We begin with the raw amino-acid sequence, 198 residues long: dTTP/UTP pyrophosphatase (198 aa).

Asp-76 (proton acceptor) is an active-site residue.

This sequence belongs to the Maf family. YhdE subfamily. Requires a divalent metal cation as cofactor.

It is found in the cytoplasm. The enzyme catalyses dTTP + H2O = dTMP + diphosphate + H(+). It catalyses the reaction UTP + H2O = UMP + diphosphate + H(+). Its function is as follows. Nucleoside triphosphate pyrophosphatase that hydrolyzes dTTP and UTP. May have a dual role in cell division arrest and in preventing the incorporation of modified nucleotides into cellular nucleic acids. The chain is dTTP/UTP pyrophosphatase from Shewanella denitrificans (strain OS217 / ATCC BAA-1090 / DSM 15013).